The sequence spans 735 residues: 1,4-alpha-glucan branching enzyme GlgB 1 (735 aa).

Catalysis depends on Asp418, which acts as the Nucleophile. The Proton donor role is filled by Glu471.

This sequence belongs to the glycosyl hydrolase 13 family. GlgB subfamily. In terms of assembly, monomer.

The enzyme catalyses Transfers a segment of a (1-&gt;4)-alpha-D-glucan chain to a primary hydroxy group in a similar glucan chain.. Its pathway is glycan biosynthesis; glycogen biosynthesis. In terms of biological role, catalyzes the formation of the alpha-1,6-glucosidic linkages in glycogen by scission of a 1,4-alpha-linked oligosaccharide from growing alpha-1,4-glucan chains and the subsequent attachment of the oligosaccharide to the alpha-1,6 position. This Rhizobium etli (strain ATCC 51251 / DSM 11541 / JCM 21823 / NBRC 15573 / CFN 42) protein is 1,4-alpha-glucan branching enzyme GlgB 1.